We begin with the raw amino-acid sequence, 143 residues long: Ribosome-binding factor A (143 aa).

Over residues 116-128 (SDDEAKQKQHGDQ) the composition is skewed to basic and acidic residues. Positions 116–143 (SDDEAKQKQHGDQQDVSQSSDDKSEGED) are disordered.

It belongs to the RbfA family. In terms of assembly, monomer. Binds 30S ribosomal subunits, but not 50S ribosomal subunits or 70S ribosomes.

The protein resides in the cytoplasm. Its function is as follows. One of several proteins that assist in the late maturation steps of the functional core of the 30S ribosomal subunit. Associates with free 30S ribosomal subunits (but not with 30S subunits that are part of 70S ribosomes or polysomes). Required for efficient processing of 16S rRNA. May interact with the 5'-terminal helix region of 16S rRNA. The protein is Ribosome-binding factor A of Shewanella sediminis (strain HAW-EB3).